The following is a 328-amino-acid chain: MEGSSNSPDRQSSGGSPPEERGGGGSGGGGGRSAAGEPVRSRWTPKPEQILILESIFNSGMVNPPKDETVRIRKLLERFGAVGDANVFYWFQNRRSRSRRRQRQMQAAAAAAAAAASSSSPSANTSPAAASAATVQVGLPPVAVVHTMAMGGSACQYEQQASSSSSSGSTGGSSLGLFAHGAGASGAGGYLQASCGASASASSALAPGLMGDVVDSGGSDDLFAISRQMGFVGSPRCSPASSPATPSSAATAAQQQFYSCQLPAATITVFINGVPMEMPRGPIDLRAMFGQDVMLVHSTGALLPVNDYGILMQSLQIGESYFLVARPT.

The span at 1 to 11 shows a compositional bias: polar residues; sequence MEGSSNSPDRQ. The interval 1–45 is disordered; that stretch reads MEGSSNSPDRQSSGGSPPEERGGGGSGGGGGRSAAGEPVRSRWTP. Gly residues predominate over residues 23-33; sequence GGGSGGGGGRS. The homeobox; WUS-type DNA-binding region spans 38–102; the sequence is PVRSRWTPKP…NRRSRSRRRQ (65 aa).

This sequence belongs to the WUS homeobox family.

It localises to the nucleus. In terms of biological role, transcription factor which may be involved in developmental processes. This is WUSCHEL-related homeobox 6 (WOX6) from Oryza sativa subsp. indica (Rice).